We begin with the raw amino-acid sequence, 209 residues long: Putative thymidylate synthase (209 aa).

Residue C137 is part of the active site.

The protein belongs to the thymidylate synthase family. Archaeal-type ThyA subfamily. In terms of assembly, monomer.

The protein localises to the cytoplasm. The protein operates within pyrimidine metabolism; dTTP biosynthesis. May catalyze the biosynthesis of dTMP using an unknown cosubstrate. The chain is Putative thymidylate synthase from Methanopyrus kandleri (strain AV19 / DSM 6324 / JCM 9639 / NBRC 100938).